Here is a 290-residue protein sequence, read N- to C-terminus: N-acetylmannosamine kinase (290 aa).

ATP is bound by residues 6–13 (ALDIGGTK) and 132–139 (GVGGGIIL). Zn(2+) is bound by residues His-156, Cys-166, Cys-168, and Cys-173.

It belongs to the ROK (NagC/XylR) family. NanK subfamily. In terms of assembly, homodimer.

The enzyme catalyses an N-acyl-D-mannosamine + ATP = an N-acyl-D-mannosamine 6-phosphate + ADP + H(+). The protein operates within amino-sugar metabolism; N-acetylneuraminate degradation; D-fructose 6-phosphate from N-acetylneuraminate: step 2/5. In terms of biological role, catalyzes the phosphorylation of N-acetylmannosamine (ManNAc) to ManNAc-6-P. The chain is N-acetylmannosamine kinase from Yersinia pseudotuberculosis serotype O:3 (strain YPIII).